Consider the following 298-residue polypeptide: Tyrosine recombinase XerC (298 aa).

A Core-binding (CB) domain is found at 1-84; that stretch reads MNHIQEAFLN…TLRTFYEYWM (84 aa). One can recognise a Tyr recombinase domain in the interval 105–286; it reads YLPQFFYEEE…SNQQLRKVYL (182 aa). Residues R145, K169, H238, R241, and H264 contribute to the active site. Y273 acts as the O-(3'-phospho-DNA)-tyrosine intermediate in catalysis.

Belongs to the 'phage' integrase family. XerC subfamily. In terms of assembly, forms a cyclic heterotetrameric complex composed of two molecules of XerC and two molecules of XerD.

It is found in the cytoplasm. Functionally, site-specific tyrosine recombinase, which acts by catalyzing the cutting and rejoining of the recombining DNA molecules. The XerC-XerD complex is essential to convert dimers of the bacterial chromosome into monomers to permit their segregation at cell division. It also contributes to the segregational stability of plasmids. This is Tyrosine recombinase XerC from Staphylococcus aureus (strain bovine RF122 / ET3-1).